Consider the following 370-residue polypeptide: Cytochrome b (370 aa).

4 consecutive transmembrane segments (helical) span residues 25–45, 69–90, 105–125, and 170–190; these read FGSM…FLAI, WIMQ…YIHI, WLSG…GYVL, and FFAL…IHII. Heme b-binding residues include His75 and His89. His174 and His188 together coordinate heme b. An a ubiquinone-binding site is contributed by His193. The next 4 helical transmembrane spans lie at 218–238, 280–300, 312–332, and 339–358; these read YKDM…MSFT, LGGT…PFTH, LTQI…WTAT, and FISI…IINP.

Belongs to the cytochrome b family. In terms of assembly, the cytochrome bc1 complex contains 3 respiratory subunits (MT-CYB, CYC1 and UQCRFS1), 2 core proteins (UQCRC1 and UQCRC2) and probably 6 low-molecular weight proteins. It depends on heme b as a cofactor.

It localises to the mitochondrion inner membrane. Functionally, component of the ubiquinol-cytochrome c reductase complex (complex III or cytochrome b-c1 complex) that is part of the mitochondrial respiratory chain. The b-c1 complex mediates electron transfer from ubiquinol to cytochrome c. Contributes to the generation of a proton gradient across the mitochondrial membrane that is then used for ATP synthesis. The polypeptide is Cytochrome b (MT-CYB) (Bungarus fasciatus (Banded krait)).